Reading from the N-terminus, the 682-residue chain is Acetyl-coenzyme A synthetase 2-like, mitochondrial (682 aa).

The N-terminal 38 residues, 1–38 (MAARSLGSGVGRLLRGLQGRSGQSGWSLSVSRSTATRL), are a transit peptide targeting the mitochondrion. CoA contacts are provided by residues 217–220 (RGGR) and threonine 334. The residue at position 389 (lysine 389) is an N6-acetyllysine. Residues 410 to 412 (GEP), 434 to 439 (DTWWQT), aspartate 526, and arginine 541 contribute to the ATP site. Serine 549 contacts CoA. Residue arginine 552 coordinates ATP. Lysine 635 carries the N6-acetyllysine modification.

It belongs to the ATP-dependent AMP-binding enzyme family. As to quaternary structure, interacts with SIRT3. Post-translationally, reversibly acetylated at Lys-635. The acetyl-CoA synthase activity is inhibited by acetylation and activated by deacetylation mediated by the deacetylase SIRT3. As to expression, highly expressed in heart, testis, kidney, skeletal muscle, lung and spleen. Detected at low levels in brain.

It localises to the mitochondrion matrix. The catalysed reaction is acetate + ATP + CoA = acetyl-CoA + AMP + diphosphate. The enzyme catalyses propanoate + ATP + CoA = propanoyl-CoA + AMP + diphosphate. Its activity is regulated as follows. Inhibited by acetylation at Lys-635 and activated by deacetylation mediated by the deacetylase SIRT3. Catalyzes the synthesis of acetyl-CoA from short-chain fatty acids. Acetate is the preferred substrate. Can also utilize propionate with a much lower affinity. Provides acetyl-CoA that is utilized mainly for oxidation under ketogenic conditions. Involved in thermogenesis under ketogenic conditions, using acetate as a vital fuel when carbohydrate availability is insufficient. The polypeptide is Acetyl-coenzyme A synthetase 2-like, mitochondrial (Acss1) (Mus musculus (Mouse)).